Reading from the N-terminus, the 833-residue chain is DNA ligase (833 aa).

NAD(+) is bound by residues 35–39, 84–85, and glutamate 115; these read DADYD and SL. Lysine 117 (N6-AMP-lysine intermediate) is an active-site residue. NAD(+) is bound by residues arginine 138, glutamate 175, lysine 292, and lysine 316. Positions 410, 413, 428, and 434 each coordinate Zn(2+). In terms of domain architecture, BRCT spans 750 to 833; that stretch reads LQTGPLDGQT…AFLGDHGQQP (84 aa).

The protein belongs to the NAD-dependent DNA ligase family. LigA subfamily. Mg(2+) serves as cofactor. The cofactor is Mn(2+).

It carries out the reaction NAD(+) + (deoxyribonucleotide)n-3'-hydroxyl + 5'-phospho-(deoxyribonucleotide)m = (deoxyribonucleotide)n+m + AMP + beta-nicotinamide D-nucleotide.. Its function is as follows. DNA ligase that catalyzes the formation of phosphodiester linkages between 5'-phosphoryl and 3'-hydroxyl groups in double-stranded DNA using NAD as a coenzyme and as the energy source for the reaction. It is essential for DNA replication and repair of damaged DNA. In Xanthomonas euvesicatoria pv. vesicatoria (strain 85-10) (Xanthomonas campestris pv. vesicatoria), this protein is DNA ligase.